The sequence spans 339 residues: D-erythrose-4-phosphate dehydrogenase (339 aa).

11–12 (RI) serves as a coordination point for NAD(+). Substrate contacts are provided by residues 153–155 (SCT), arginine 199, 212–213 (TK), and arginine 235. The active-site Nucleophile is the cysteine 154. Residue asparagine 317 coordinates NAD(+).

The protein belongs to the glyceraldehyde-3-phosphate dehydrogenase family. Epd subfamily. Homotetramer.

Its subcellular location is the cytoplasm. It catalyses the reaction D-erythrose 4-phosphate + NAD(+) + H2O = 4-phospho-D-erythronate + NADH + 2 H(+). It participates in cofactor biosynthesis; pyridoxine 5'-phosphate biosynthesis; pyridoxine 5'-phosphate from D-erythrose 4-phosphate: step 1/5. In terms of biological role, catalyzes the NAD-dependent conversion of D-erythrose 4-phosphate to 4-phosphoerythronate. The sequence is that of D-erythrose-4-phosphate dehydrogenase from Shewanella pealeana (strain ATCC 700345 / ANG-SQ1).